The following is a 157-amino-acid chain: MFDILIYLFENYIHNESRISIDYDSLTNDLSDIGFQRRDIYNALSWLKNLSCYKKNIIPSINPLSNKITIRIYTQEESLKLNVDCRGFILFLEQLEILTLDTREVIIERIMELDINELNLEDLKWIVLIVLFNVPGCESAYHKLENLLFNFKEDIIH.

Belongs to the Smg family.

This chain is Protein Smg, found in Buchnera aphidicola subsp. Acyrthosiphon pisum (strain 5A).